A 204-amino-acid chain; its full sequence is Large ribosomal subunit protein eL15 (204 aa).

Belongs to the eukaryotic ribosomal protein eL15 family. As to quaternary structure, component of the large ribosomal subunit.

Its subcellular location is the cytoplasm. Its function is as follows. Component of the large ribosomal subunit. The ribosome is a large ribonucleoprotein complex responsible for the synthesis of proteins in the cell. The protein is Large ribosomal subunit protein eL15 (rpl15) of Silurus asotus (Amur catfish).